We begin with the raw amino-acid sequence, 548 residues long: Probable inorganic phosphate transporter 1-5 (548 aa).

Residues 1–23 (MVQDRKVLDALDTAKTQWYHFTA) lie on the Cytoplasmic side of the membrane. The chain crosses the membrane as a helical span at residues 24–44 (VVIAGMGFFTDAYDLFSISLV). The Extracellular portion of the chain corresponds to 45–69 (TKLLGRIYYFNPASKSPGSLPPNVS). Residues 70 to 90 (AAVNGVAFCGTLAGQLFFGWL) form a helical membrane-spanning segment. Topologically, residues 91 to 98 (GDKMGRKK) are cytoplasmic. The chain crosses the membrane as a helical span at residues 99–119 (VYGMTLMLMVICCLASGLSFG). The Extracellular portion of the chain corresponds to 120-123 (SSAK). A helical membrane pass occupies residues 124-144 (GVMATLCFFRFWLGFGIGGDY). Topologically, residues 145–163 (PLSATIMSEYANKRTRGAF) are cytoplasmic. Residues 164–184 (IAAVFAMQGFGNLTGGIVAII) form a helical membrane-spanning segment. Topologically, residues 185–210 (VSAAFKLRFDAPAYRDDRAGSTVPQA) are extracellular. The helical transmembrane segment at 211–231 (DYAWRIVLMFGAIPALLTYYW) threads the bilayer. The Cytoplasmic portion of the chain corresponds to 232 to 303 (RMKMPETARY…REFARRHGHH (72 aa)). A helical membrane pass occupies residues 304–324 (LLGTTVCWFVLDIAYYSQNLF). Residues 325-355 (QKDIYTAVQWLPKADTMSALEEMFKISRAQT) lie on the Extracellular side of the membrane. Residues 356–376 (LVALCGTIPGYWFTVLFIDIV) form a helical membrane-spanning segment. Topologically, residues 377-378 (GR) are cytoplasmic. A helical membrane pass occupies residues 379-399 (FAIQLGGFFLMTAFMLGLAVP). The Extracellular segment spans residues 400 to 405 (YHHWTT). The helical transmembrane segment at 406-426 (PGNHVGFVVMYAFTFFFANFG) threads the bilayer. Over 427–449 (PNSTTFIVPAEIFPARLRSTCHG) the chain is Cytoplasmic. A helical transmembrane segment spans residues 450 to 470 (ISSAAGKMGAIVGSFGFLYAA). Residues 471-490 (QSTDPSKTDAGYPRGIGVRN) are Extracellular-facing. Residues 491-511 (SLFLLAGCNVVGFLFTFLVPE) traverse the membrane as a helical segment. The Cytoplasmic portion of the chain corresponds to 512–548 (SKGKSLEELSGENEMEAEPAAATNSYRQTVPDSGQSE). Residues 518–548 (EELSGENEMEAEPAAATNSYRQTVPDSGQSE) are disordered. Positions 533-548 (ATNSYRQTVPDSGQSE) are enriched in polar residues.

It belongs to the major facilitator superfamily. Phosphate:H(+) symporter (TC 2.A.1.9) family. As to expression, expressed at low levels in roots.

The protein localises to the membrane. Its function is as follows. High-affinity transporter for external inorganic phosphate. The chain is Probable inorganic phosphate transporter 1-5 (PHT1-5) from Oryza sativa subsp. japonica (Rice).